Here is a 673-residue protein sequence, read N- to C-terminus: UvrABC system protein B (673 aa).

The region spanning 26-183 is the Helicase ATP-binding domain; the sequence is EGLEDGLAHQ…RRLAELQYTR (158 aa). 39–46 is an ATP binding site; it reads GVTGSGKT. The Beta-hairpin motif lies at 92–115; sequence YYDYYQPEAYVPSSDTFIEKDASV. In terms of domain architecture, Helicase C-terminal spans 431 to 597; that stretch reads QVDDLLSEIR…GLNKKVVDIL (167 aa). The region spanning 633–668 is the UVR domain; it reads QQKIHELEGQMMQHAQNLEFEEAAQIRDQLHQLREL.

This sequence belongs to the UvrB family. As to quaternary structure, forms a heterotetramer with UvrA during the search for lesions. Interacts with UvrC in an incision complex.

The protein localises to the cytoplasm. Its function is as follows. The UvrABC repair system catalyzes the recognition and processing of DNA lesions. A damage recognition complex composed of 2 UvrA and 2 UvrB subunits scans DNA for abnormalities. Upon binding of the UvrA(2)B(2) complex to a putative damaged site, the DNA wraps around one UvrB monomer. DNA wrap is dependent on ATP binding by UvrB and probably causes local melting of the DNA helix, facilitating insertion of UvrB beta-hairpin between the DNA strands. Then UvrB probes one DNA strand for the presence of a lesion. If a lesion is found the UvrA subunits dissociate and the UvrB-DNA preincision complex is formed. This complex is subsequently bound by UvrC and the second UvrB is released. If no lesion is found, the DNA wraps around the other UvrB subunit that will check the other stand for damage. This Klebsiella pneumoniae subsp. pneumoniae (strain ATCC 700721 / MGH 78578) protein is UvrABC system protein B.